Consider the following 235-residue polypeptide: MQEPHRQPAICLSTRLAKARLYLCTDARRERGDLAQFVNAALAGGVDIVQLRDKGSVGEQQFGPLEARDALAACEIFTDATGRHDALFAVNDRADIARAAGADVLHLGQGDLPPGVARQIVCRQMLIGLSTHDRHQVAAAVAALDAGLVDYFCVGPCWPTPTKPDRPAPGLELVRAAAELAGDKPWFAIGGIDAQRLPDVLHAGARRIVVVRAITAAADPRAAAEQLISTLTATS.

Residues 50-54 (QLRDK) and Asn91 contribute to the 4-amino-2-methyl-5-(diphosphooxymethyl)pyrimidine site. Mg(2+) is bound by residues Asp92 and Asp111. Ser130 serves as a coordination point for 4-amino-2-methyl-5-(diphosphooxymethyl)pyrimidine. Residue 160–162 (TPT) participates in 2-[(2R,5Z)-2-carboxy-4-methylthiazol-5(2H)-ylidene]ethyl phosphate binding. Lys163 provides a ligand contact to 4-amino-2-methyl-5-(diphosphooxymethyl)pyrimidine. Gly191 is a 2-[(2R,5Z)-2-carboxy-4-methylthiazol-5(2H)-ylidene]ethyl phosphate binding site.

The protein belongs to the thiamine-phosphate synthase family. Requires Mg(2+) as cofactor.

The catalysed reaction is 2-[(2R,5Z)-2-carboxy-4-methylthiazol-5(2H)-ylidene]ethyl phosphate + 4-amino-2-methyl-5-(diphosphooxymethyl)pyrimidine + 2 H(+) = thiamine phosphate + CO2 + diphosphate. It carries out the reaction 2-(2-carboxy-4-methylthiazol-5-yl)ethyl phosphate + 4-amino-2-methyl-5-(diphosphooxymethyl)pyrimidine + 2 H(+) = thiamine phosphate + CO2 + diphosphate. It catalyses the reaction 4-methyl-5-(2-phosphooxyethyl)-thiazole + 4-amino-2-methyl-5-(diphosphooxymethyl)pyrimidine + H(+) = thiamine phosphate + diphosphate. Its pathway is cofactor biosynthesis; thiamine diphosphate biosynthesis; thiamine phosphate from 4-amino-2-methyl-5-diphosphomethylpyrimidine and 4-methyl-5-(2-phosphoethyl)-thiazole: step 1/1. In terms of biological role, condenses 4-methyl-5-(beta-hydroxyethyl)thiazole monophosphate (THZ-P) and 2-methyl-4-amino-5-hydroxymethyl pyrimidine pyrophosphate (HMP-PP) to form thiamine monophosphate (TMP). The protein is Thiamine-phosphate synthase of Mycobacterium leprae (strain TN).